A 405-amino-acid chain; its full sequence is Glucose-1-phosphate adenylyltransferase (405 aa).

Residues Tyr-96, Gly-161, 176–177, and Ser-194 contribute to the alpha-D-glucose 1-phosphate site; that span reads EK.

Belongs to the bacterial/plant glucose-1-phosphate adenylyltransferase family. As to quaternary structure, homotetramer.

It carries out the reaction alpha-D-glucose 1-phosphate + ATP + H(+) = ADP-alpha-D-glucose + diphosphate. The protein operates within glycan biosynthesis; glycogen biosynthesis. Its function is as follows. Involved in the biosynthesis of ADP-glucose, a building block required for the elongation reactions to produce glycogen. Catalyzes the reaction between ATP and alpha-D-glucose 1-phosphate (G1P) to produce pyrophosphate and ADP-Glc. The sequence is that of Glucose-1-phosphate adenylyltransferase from Aliivibrio fischeri (strain MJ11) (Vibrio fischeri).